A 655-amino-acid chain; its full sequence is RalA-binding protein 1 (655 aa).

Residues 1–158 form a disordered region; it reads MTECFLPPTS…KKSKDLTAAD (158 aa). N-acetylthreonine is present on Thr-2. A compositionally biased stretch (polar residues) spans 24-33; the sequence is LTRTPSSEEI. Phosphoserine occurs at positions 29, 30, and 34. Position 44 is a phosphothreonine (Thr-44). Phosphoserine is present on residues Ser-48 and Ser-62. The segment covering 52 to 68 has biased composition (basic and acidic residues); it reads DILHEPPDVVSDDEKDH. ATP is bound at residue 69 to 74; sequence GKKKGK. Positions 69–79 are enriched in basic residues; that stretch reads GKKKGKFKKKE. Residues Ser-92 and Ser-93 each carry the phosphoserine modification. Basic residues predominate over residues 102-118; it reads KMKRSKGIHVFKKPSFS. The segment at 102 to 119 is nuclear localization signal; sequence KMKRSKGIHVFKKPSFSK. Residues 119–155 are compositionally biased toward basic and acidic residues; that stretch reads KKKEKDFKIKEKPKEEKHKEEKHKEEKHKEKKSKDLT. A mediates association with membranes and could form transmembrane domains region spans residues 154 to 219; sequence LTAADVVKQW…PAVFRECIDY (66 aa). In terms of domain architecture, Rho-GAP spans 192–380; the sequence is IPLADAVERT…VVLKQVMKPL (189 aa). The tract at residues 403–499 is mediates interaction with RALA and RALB; it reads RRQEFLLNCL…LTEQEELLAM (97 aa). Residue 418–425 coordinates ATP; sequence GGIKDLSK. Ser-461 and Ser-463 each carry phosphoserine. The interval 500-655 is mediates interaction with REPS1 and REPS2; the sequence is EQFLRRQIAS…PSRDRKETSI (156 aa). Disordered stretches follow at residues 525–551 and 601–655; these read QSRQQHGRSETEEYSSESESESEDEEE and AEQQ…ETSI. The segment covering 536-551 has biased composition (acidic residues); the sequence is EEYSSESESESEDEEE. The segment covering 624-655 has biased composition (basic and acidic residues); sequence GVLEPKAAKEQPKAGKEPAKPSPSRDRKETSI. Ser-645 carries the post-translational modification Phosphoserine.

As to quaternary structure, interacts with the GTP-bound form of RALA (via effector domain); during mitosis, recruits RALBP1 to the mitochondrion where it promotes DNM1L phosphorylation and mitochondrial fission. Interacts with DNM1L; mediates its mitotic kinase cyclin B-CDK1-mediated phosphorylation during mitosis to promote mitochondrial fission. Interacts with the mitotic kinase cyclin B-CDK1 during mitosis. Interacts with the GTP-bound form of RALB (via effector domain). Interacts with REPS1; the interaction is direct and does not affect RALA-binding nor GTPase activator activity of RALBP1. Interacts with REPS2; the interaction is direct and does not affect RALA-binding nor GTPase activator activity of RALBP1. Interacts with EPN1, NUMB and TFAP2A during interphase and mitosis. Interacts with AP2M1; as part of the AP2 complex. Interacts with CDC42. Interacts with RAC1. Tyrosine-phosphorylated upon stimulation of cells with EGF. Post-translationally, may undergo proteolytic cleavage to give peptides which reassemble to form a transporter complex. Expressed ubiquitously but at low levels. Shows a strong expression in the erythrocytes.

The protein resides in the cell membrane. It is found in the cytoplasm. The protein localises to the cytosol. Its subcellular location is the cytoskeleton. It localises to the spindle pole. The protein resides in the nucleus. It is found in the mitochondrion. The enzyme catalyses an S-substituted glutathione(in) + ATP + H2O = an S-substituted glutathione(out) + ADP + phosphate + H(+). It catalyses the reaction ATP + H2O + xenobioticSide 1 = ADP + phosphate + xenobioticSide 2.. The catalysed reaction is leukotriene C4(in) + ATP + H2O = leukotriene C4(out) + ADP + phosphate + H(+). In terms of biological role, multifunctional protein that functions as a downstream effector of RALA and RALB. As a GTPase-activating protein/GAP can inactivate CDC42 and RAC1 by stimulating their GTPase activity. As part of the Ral signaling pathway, may also regulate ligand-dependent EGF and insulin receptors-mediated endocytosis. During mitosis, may act as a scaffold protein in the phosphorylation of EPSIN/EPN1 by the mitotic kinase cyclin B-CDK1, preventing endocytosis during that phase of the cell cycle. During mitosis, also controls mitochondrial fission as an effector of RALA. Recruited to mitochondrion by RALA, acts as a scaffold to foster the mitotic kinase cyclin B-CDK1-mediated phosphorylation and activation of DNM1L. Could also function as a primary ATP-dependent active transporter for glutathione conjugates of electrophiles. May also actively catalyze the efflux of a wide range of substrates including xenobiotics like doxorubicin (DOX) contributing to cell multidrug resistance. This Homo sapiens (Human) protein is RalA-binding protein 1.